Consider the following 490-residue polypeptide: Phosphoglucosamine mutase (490 aa).

Ser-139 serves as the catalytic Phosphoserine intermediate. The Mg(2+) site is built by Ser-139, Asp-279, Asp-281, and Asp-283. Ser-139 bears the Phosphoserine mark.

Belongs to the phosphohexose mutase family. Mg(2+) serves as cofactor. In terms of processing, activated by phosphorylation.

The enzyme catalyses alpha-D-glucosamine 1-phosphate = D-glucosamine 6-phosphate. Catalyzes the conversion of glucosamine-6-phosphate to glucosamine-1-phosphate. This is Phosphoglucosamine mutase from Nostoc punctiforme (strain ATCC 29133 / PCC 73102).